Here is a 528-residue protein sequence, read N- to C-terminus: Protein DA1-related 2 (528 aa).

A disordered region spans residues S60–I108. The span at L91–R106 shows a compositional bias: basic and acidic residues. A UIM 1 domain is found at R99–R118. The 22-residue stretch at D127–P148 folds into the UIM 2; degenerate domain. The LIM zinc-binding domain occupies R160–P220. The segment at D447 to K474 is disordered. Residues S455–K470 show a composition bias toward low complexity.

As to quaternary structure, interacts with ubiquitin, TCP14 and TCP15. Post-translationally, polyubiquitinated by DA2. As to expression, expressed in the vasculature of leaves, inflorescence stems, flowers, hypocotyls, and primary and lateral roots. In roots, expressed in phloem companion cells.

Functionally, acts redundantly with DA1 and DAR1 to regulate endoreduplication during leaf development. Together with DA1 and DAR1, modulates the protein stability of the transcription factors TCP14 and TCP15, which repress endoreduplication by directly regulating the expression of cell-cycle genes. Involved in root phloem development. Is an essential component of early phloem development, long-distance delivery of phloem content, and proper maintenance of root system architecture. Involved in the control of root meristem size. Functions genetically downstream of cytokinin and IAA3 to maintain normal auxin distribution by influencing polar auxin transport. Acts through the PLETHORA pathway, upstream of PLT1 and PLT2 to influence root stem cell niche activity and thus control root meristem size. The polypeptide is Protein DA1-related 2 (Arabidopsis thaliana (Mouse-ear cress)).